The following is a 226-amino-acid chain: 3-dehydroquinate dehydratase (226 aa).

Residues serine 21, 42–44 (EVR), and arginine 70 contribute to the 3-dehydroquinate site. The active-site Proton donor/acceptor is the histidine 124. Lysine 149 functions as the Schiff-base intermediate with substrate in the catalytic mechanism. 3-dehydroquinate contacts are provided by arginine 187, threonine 206, and glutamine 210.

This sequence belongs to the type-I 3-dehydroquinase family. Homodimer.

It carries out the reaction 3-dehydroquinate = 3-dehydroshikimate + H2O. It participates in metabolic intermediate biosynthesis; chorismate biosynthesis; chorismate from D-erythrose 4-phosphate and phosphoenolpyruvate: step 3/7. Functionally, involved in the third step of the chorismate pathway, which leads to the biosynthesis of aromatic amino acids. Catalyzes the cis-dehydration of 3-dehydroquinate (DHQ) and introduces the first double bond of the aromatic ring to yield 3-dehydroshikimate. The sequence is that of 3-dehydroquinate dehydratase from Methanothrix thermoacetophila (strain DSM 6194 / JCM 14653 / NBRC 101360 / PT) (Methanosaeta thermophila).